Consider the following 66-residue polypeptide: Large ribosomal subunit protein bL35 (66 aa).

The protein belongs to the bacterial ribosomal protein bL35 family.

This Borreliella afzelii (strain PKo) (Borrelia afzelii) protein is Large ribosomal subunit protein bL35.